Consider the following 277-residue polypeptide: Shikimate dehydrogenase (NADP(+)) (277 aa).

Residues 15–17 (SLS) and Thr62 contribute to the shikimate site. Lys66 acts as the Proton acceptor in catalysis. Residues Asn87 and Asp102 each coordinate shikimate. NADP(+) contacts are provided by residues 127–131 (GAGGA), 151–156 (NRTVDK), and Ile219. Tyr221 is a shikimate binding site. Gly242 serves as a coordination point for NADP(+).

The protein belongs to the shikimate dehydrogenase family. Homodimer.

It carries out the reaction shikimate + NADP(+) = 3-dehydroshikimate + NADPH + H(+). Its pathway is metabolic intermediate biosynthesis; chorismate biosynthesis; chorismate from D-erythrose 4-phosphate and phosphoenolpyruvate: step 4/7. In terms of biological role, involved in the biosynthesis of the chorismate, which leads to the biosynthesis of aromatic amino acids. Catalyzes the reversible NADPH linked reduction of 3-dehydroshikimate (DHSA) to yield shikimate (SA). This chain is Shikimate dehydrogenase (NADP(+)), found in Bacillus anthracis (strain CDC 684 / NRRL 3495).